Here is a 131-residue protein sequence, read N- to C-terminus: Mesogenin-1 (131 aa).

The tract at residues 22-79 (EDRSFGDSASSPESESFDSACSSPDARSSPTAGCEHAEQQKPKVKMSMRRRMKASERE) is disordered. Over residues 27–45 (GDSASSPESESFDSACSSP) the composition is skewed to low complexity. The segment covering 63–73 (PKVKMSMRRRM) has biased composition (basic residues). Residues 70–124 (RRRMKASEREKLRMRSLAEALHQLRDYLPPGYSRRGQPLTKIQTLKYTIQYIKEL) form the bHLH domain.

Coexpression of ntl and spt is required for expression.

It is found in the nucleus. Involved in specifying the paraxial, but not dorsal, mesoderm. May regulate the expression of T-box transcription factors required for mesoderm formation and differentiation. This Danio rerio (Zebrafish) protein is Mesogenin-1 (msgn1).